The chain runs to 60 residues: Mastoparan (60 aa).

The N-terminal stretch at 1 to 27 (MKDTILILFTAFIALLGFFGMSAEALA) is a signal peptide. AXPX repeat units follow at residues 27 to 30 (ADPL), 31 to 34 (ADPS), 35 to 38 (AGPN), and 41 to 44 (ADPE). The propeptide occupies 28 to 45 (DPLADPSAGPNAEADPEA). L59 carries the post-translational modification Leucine amide.

Belongs to the MCD family. Mastoparan subfamily. In terms of tissue distribution, expressed by the venom gland.

The protein localises to the secreted. Its subcellular location is the target cell membrane. Functionally, mast cell degranulating peptide. Its mast cell degranulation activity may be related to the activation of G-protein coupled receptors in mast cells as well as interaction with other proteins located in cell endosomal membranes in the mast cells. Has a membranolytic activity on human glioblastoma multiforme cells (brain tumor cells) that leads to cell necrosis. The sequence is that of Mastoparan from Vespa orientalis (Oriental hornet).